A 681-amino-acid chain; its full sequence is Sorting nexin-41 (681 aa).

The span at 1-12 shows a compositional bias: acidic residues; sequence MSTDNLFEDIEQ. Positions 1–94 are disordered; sequence MSTDNLFEDI…HNTSLNNGYP (94 aa). Residues 13–24 are compositionally biased toward polar residues; the sequence is DNNPSFYGNPSI. The region spanning 113 to 236 is the PX domain; it reads NDSQLQVDII…KFFDPNYELC (124 aa). A 1,2-diacyl-sn-glycero-3-phospho-(1D-myo-inositol-3-phosphate)-binding residues include arginine 151, serine 153, lysine 177, and arginine 200. 2 disordered regions span residues 475-505 and 558-597; these read LASR…TENF and TATG…QTSI. 2 stretches are compositionally biased toward low complexity: residues 482–497 and 558–589; these read DNDS…NNND and TATG…QSQS.

This sequence belongs to the sorting nexin family.

The protein localises to the endosome membrane. It is found in the endomembrane system. Its function is as follows. May be required for cytoplasm to vacuole transport (Cvt) and pexophagy. This chain is Sorting nexin-41 (SNX41), found in Candida albicans (strain SC5314 / ATCC MYA-2876) (Yeast).